The chain runs to 592 residues: Arginine--tRNA ligase (592 aa).

Residues 134–144 carry the 'HIGH' region motif; sequence ANPTGPLHVGH.

Belongs to the class-I aminoacyl-tRNA synthetase family. As to quaternary structure, monomer.

The protein resides in the cytoplasm. The catalysed reaction is tRNA(Arg) + L-arginine + ATP = L-arginyl-tRNA(Arg) + AMP + diphosphate. The polypeptide is Arginine--tRNA ligase (Coxiella burnetii (strain CbuK_Q154) (Coxiella burnetii (strain Q154))).